The following is a 131-amino-acid chain: C-glycoside deglycosidase beta subunit (131 aa).

It belongs to the C-glycoside deglycosidase beta subunit family. As to quaternary structure, heterodimer composed of an alpha subunit (CarB1) and a beta subunit (CarC1). The cofactor is Mg(2+).

It carries out the reaction 3''-dehydroisovitexin = 1,5-anhydro-D-erythro-hex-1-en-3-ulose + apigenin. With respect to regulation, activity is strongly reduced in the presence of chelating agents. Functionally, carbon-carbon bond-cleaving enzyme which participates in the metabolism of C-glycosides. Acts on the C6-glycosylated compound 3''-dehydroisovitexin (3''-oxo-isovitexin). Shows weak activity with 3''-dehydroisoorientin (3''-oxo-homoorientin) and 3'-dehydromangiferin (3'-oxo-mangiferin). This Arthrobacter globiformis (strain ATCC 8010 / DSM 20124 / JCM 1332 / NBRC 12137 / NCIMB 8907 / NRRL B-2979 / 168) protein is C-glycoside deglycosidase beta subunit.